The primary structure comprises 432 residues: Glutamyl-tRNA reductase (432 aa).

Residues 49-52 (TCNR), serine 109, 114-116 (EGQ), and glutamine 120 each bind substrate. Cysteine 50 acts as the Nucleophile in catalysis. 189–194 (GAGKMS) lines the NADP(+) pocket.

This sequence belongs to the glutamyl-tRNA reductase family. In terms of assembly, homodimer.

It catalyses the reaction (S)-4-amino-5-oxopentanoate + tRNA(Glu) + NADP(+) = L-glutamyl-tRNA(Glu) + NADPH + H(+). It functions in the pathway porphyrin-containing compound metabolism; protoporphyrin-IX biosynthesis; 5-aminolevulinate from L-glutamyl-tRNA(Glu): step 1/2. Its pathway is porphyrin-containing compound metabolism; chlorophyll biosynthesis. Catalyzes the NADPH-dependent reduction of glutamyl-tRNA(Glu) to glutamate 1-semialdehyde (GSA). In Cyanothece sp. (strain PCC 7425 / ATCC 29141), this protein is Glutamyl-tRNA reductase.